Reading from the N-terminus, the 642-residue chain is 1-deoxy-D-xylulose-5-phosphate synthase (642 aa).

Thiamine diphosphate is bound by residues H79 and 120-122 (AHS). Residue D151 participates in Mg(2+) binding. Thiamine diphosphate is bound by residues 152–153 (GS), N180, Y290, and E372. Mg(2+) is bound at residue N180.

It belongs to the transketolase family. DXPS subfamily. As to quaternary structure, homodimer. The cofactor is Mg(2+). Requires thiamine diphosphate as cofactor.

The catalysed reaction is D-glyceraldehyde 3-phosphate + pyruvate + H(+) = 1-deoxy-D-xylulose 5-phosphate + CO2. Its pathway is metabolic intermediate biosynthesis; 1-deoxy-D-xylulose 5-phosphate biosynthesis; 1-deoxy-D-xylulose 5-phosphate from D-glyceraldehyde 3-phosphate and pyruvate: step 1/1. Catalyzes the acyloin condensation reaction between C atoms 2 and 3 of pyruvate and glyceraldehyde 3-phosphate to yield 1-deoxy-D-xylulose-5-phosphate (DXP). The polypeptide is 1-deoxy-D-xylulose-5-phosphate synthase (Beijerinckia indica subsp. indica (strain ATCC 9039 / DSM 1715 / NCIMB 8712)).